The primary structure comprises 394 residues: Phosphopentomutase (394 aa).

6 residues coordinate Mn(2+): aspartate 14, aspartate 287, histidine 292, aspartate 328, histidine 329, and histidine 340.

It belongs to the phosphopentomutase family. It depends on Mn(2+) as a cofactor.

The protein resides in the cytoplasm. It catalyses the reaction 2-deoxy-alpha-D-ribose 1-phosphate = 2-deoxy-D-ribose 5-phosphate. The enzyme catalyses alpha-D-ribose 1-phosphate = D-ribose 5-phosphate. It functions in the pathway carbohydrate degradation; 2-deoxy-D-ribose 1-phosphate degradation; D-glyceraldehyde 3-phosphate and acetaldehyde from 2-deoxy-alpha-D-ribose 1-phosphate: step 1/2. In terms of biological role, isomerase that catalyzes the conversion of deoxy-ribose 1-phosphate (dRib-1-P) and ribose 1-phosphate (Rib-1-P) to deoxy-ribose 5-phosphate (dRib-5-P) and ribose 5-phosphate (Rib-5-P), respectively. The polypeptide is Phosphopentomutase (Listeria monocytogenes serovar 1/2a (strain ATCC BAA-679 / EGD-e)).